Consider the following 371-residue polypeptide: Histidinol-phosphate aminotransferase (371 aa).

An N6-(pyridoxal phosphate)lysine modification is found at Lys-229.

The protein belongs to the class-II pyridoxal-phosphate-dependent aminotransferase family. Histidinol-phosphate aminotransferase subfamily. Homodimer. It depends on pyridoxal 5'-phosphate as a cofactor.

The catalysed reaction is L-histidinol phosphate + 2-oxoglutarate = 3-(imidazol-4-yl)-2-oxopropyl phosphate + L-glutamate. The protein operates within amino-acid biosynthesis; L-histidine biosynthesis; L-histidine from 5-phospho-alpha-D-ribose 1-diphosphate: step 7/9. The chain is Histidinol-phosphate aminotransferase from Roseiflexus castenholzii (strain DSM 13941 / HLO8).